The primary structure comprises 87 residues: MNSLLIIAACLALIGTVWAKEGYIVNYHTGCKYECFKLGDNDYCLRECKLRHGKGSGGYCYAFGCWCTHLYEQAVVWPLPKKKCNGK.

Residues 1 to 19 (MNSLLIIAACLALIGTVWA) form the signal peptide. Positions 20 to 85 (KEGYIVNYHT…VWPLPKKKCN (66 aa)) constitute an LCN-type CS-alpha/beta domain. Disulfide bonds link Cys31/Cys84, Cys35/Cys60, Cys44/Cys65, and Cys48/Cys67. Position 85 is an asparagine amide (Asn85).

This sequence belongs to the long (4 C-C) scorpion toxin superfamily. Sodium channel inhibitor family. Beta subfamily. In terms of tissue distribution, expressed by the venom gland.

It localises to the secreted. Functionally, beta toxins bind voltage-independently at site-4 of sodium channels (Nav) and shift the voltage of activation toward more negative potentials thereby affecting sodium channel activation and promoting spontaneous and repetitive firing. This Centruroides sculpturatus (Arizona bark scorpion) protein is Beta-toxin CsE3.